The following is a 239-amino-acid chain: Orotidine 5'-phosphate decarboxylase (239 aa).

Residues Asp11, Lys33, 60–69 (DLKCHDIPTT), Thr123, Arg185, Gln194, Gly214, and Arg215 each bind substrate. Lys62 acts as the Proton donor in catalysis.

It belongs to the OMP decarboxylase family. Type 1 subfamily. As to quaternary structure, homodimer.

It catalyses the reaction orotidine 5'-phosphate + H(+) = UMP + CO2. It functions in the pathway pyrimidine metabolism; UMP biosynthesis via de novo pathway; UMP from orotate: step 2/2. Its function is as follows. Catalyzes the decarboxylation of orotidine 5'-monophosphate (OMP) to uridine 5'-monophosphate (UMP). The protein is Orotidine 5'-phosphate decarboxylase of Bacillus licheniformis (strain ATCC 14580 / DSM 13 / JCM 2505 / CCUG 7422 / NBRC 12200 / NCIMB 9375 / NCTC 10341 / NRRL NRS-1264 / Gibson 46).